Here is a 275-residue protein sequence, read N- to C-terminus: Mitochondrial prohibitin complex protein 1 (275 aa).

A coiled-coil region spans residues 180–213 (REFTEAVEMKQVAQQEAEKARYLVEKAEQMKIAA).

The protein belongs to the prohibitin family. As to quaternary structure, high molecular weight complex that consist of phb-1 and phb-2.

It is found in the mitochondrion inner membrane. Functionally, PHB proteins are essential during embryonic development and are required for somatic and germline differentiation in the larval gonad. A deficiency in PHB proteins results in altered mitochondrial biogenesis in body wall muscle cells. The chain is Mitochondrial prohibitin complex protein 1 (phb-1) from Caenorhabditis elegans.